Reading from the N-terminus, the 518-residue chain is OTU domain-containing protein 5 (518 aa).

Disordered regions lie at residues 1 to 79 (MTIL…SGGA) and 105 to 144 (PGHS…ETAA). Pro residues predominate over residues 39 to 53 (SSPPPRWAYPGNPAP). Residues 116-125 (SAGPGAPGSS) show a composition bias toward low complexity. Positions 171 to 294 (FIIKQMKEDG…NIHYNSVVNP (124 aa)) constitute an OTU domain. The interval 176–182 (MKEDGAC) is cys-loop. Aspartate 179 is a catalytic residue. Cysteine 182 (nucleophile) is an active-site residue. A variable-loop region spans residues 231-241 (KRKNNCHGNHI). Residues 282–287 (YHRNIH) form a his-loop region. The active site involves histidine 287. Residues 371–450 (ARQPRKASAT…GPSNQTCAGA (80 aa)) are disordered. Residues 377-390 (ASATCSSATAAASS) are compositionally biased toward low complexity.

This sequence belongs to the peptidase C85 family.

It carries out the reaction Thiol-dependent hydrolysis of ester, thioester, amide, peptide and isopeptide bonds formed by the C-terminal Gly of ubiquitin (a 76-residue protein attached to proteins as an intracellular targeting signal).. Deubiquitinating enzyme that may function as negative regulator of the innate immune system. Has peptidase activity towards 'Lys-48'- and 'Lys-63'-linked polyubiquitin chains. Can also cleave 'Lys-11'-linked ubiquitin chains (in vitro). This is OTU domain-containing protein 5 (otud5) from Xenopus tropicalis (Western clawed frog).